Consider the following 383-residue polypeptide: ATP phosphoribosyltransferase regulatory subunit (383 aa).

It belongs to the class-II aminoacyl-tRNA synthetase family. HisZ subfamily. Heteromultimer composed of HisG and HisZ subunits.

The protein resides in the cytoplasm. It functions in the pathway amino-acid biosynthesis; L-histidine biosynthesis; L-histidine from 5-phospho-alpha-D-ribose 1-diphosphate: step 1/9. Required for the first step of histidine biosynthesis. May allow the feedback regulation of ATP phosphoribosyltransferase activity by histidine. This Neisseria gonorrhoeae (strain ATCC 700825 / FA 1090) protein is ATP phosphoribosyltransferase regulatory subunit.